The chain runs to 180 residues: Hypoxanthine-guanine phosphoribosyltransferase (180 aa).

Lys43 and Gly44 together coordinate diphosphate. Mg(2+) is bound by residues Glu99 and Asp100. Asp103 (proton acceptor) is an active-site residue. GMP contacts are provided by residues Lys131, 152-153 (FI), and Asp159. Arg165 is a diphosphate binding site.

This sequence belongs to the purine/pyrimidine phosphoribosyltransferase family. Mg(2+) serves as cofactor.

It localises to the cytoplasm. The enzyme catalyses IMP + diphosphate = hypoxanthine + 5-phospho-alpha-D-ribose 1-diphosphate. It catalyses the reaction GMP + diphosphate = guanine + 5-phospho-alpha-D-ribose 1-diphosphate. The protein operates within purine metabolism; IMP biosynthesis via salvage pathway; IMP from hypoxanthine: step 1/1. Its pathway is purine metabolism; GMP biosynthesis via salvage pathway; GMP from guanine: step 1/1. Purine salvage pathway enzyme that catalyzes the transfer of the ribosyl-5-phosphate group from 5-phospho-alpha-D-ribose 1-diphosphate (PRPP) to the N9 position of the 6-oxopurines hypoxanthine and guanine to form the corresponding ribonucleotides IMP (inosine 5'-monophosphate) and GMP (guanosine 5'-monophosphate), with the release of PPi. The chain is Hypoxanthine-guanine phosphoribosyltransferase (hpt) from Streptococcus thermophilus (strain CNRZ 1066).